The primary structure comprises 342 residues: Cathepsin B-like cysteine proteinase 2 (342 aa).

The signal sequence occupies residues 1–18 (MKYLVLALCTYLCSQSGA). The propeptide at 19-86 (DENAAQGIPL…VKEDPDPEVD (68 aa)) is activation peptide. Residue Asn99 is glycosylated (N-linked (GlcNAc...) asparagine). 6 disulfide bridges follow: Cys100–Cys128, Cys111–Cys156, Cys147–Cys214, Cys148–Cys152, Cys185–Cys218, and Cys193–Cys205. Residue Cys114 is part of the active site. Asn138 is a glycosylation site (N-linked (GlcNAc...) asparagine). Residue Asn198 is glycosylated (N-linked (GlcNAc...) asparagine). His285 is an active-site residue. Asn296 carries N-linked (GlcNAc...) asparagine glycosylation. The active site involves Asn305.

The protein belongs to the peptidase C1 family.

Its function is as follows. Expression of the protease correlates with blood-feeding and suggests a role for the protease in blood digestion. This Haemonchus contortus (Barber pole worm) protein is Cathepsin B-like cysteine proteinase 2 (AC-2).